The sequence spans 310 residues: Very-long-chain enoyl-CoA reductase (310 aa).

Residues 1–85 (MPITIKSRSK…KDLGPQISWR (85 aa)) lie on the Cytoplasmic side of the membrane. The helical transmembrane segment at 86–106 (LVFFCEYLGPVLVHSLFYYLS) threads the bilayer. Residues 107–141 (TIPTVVDRWHSASSDYNPFLNRVAYFLILGHYGKR) are Lumenal-facing. Residues 142–162 (LFETLFVHQFSLATMPIFNLF) form a helical membrane-spanning segment. Topologically, residues 163–165 (KNC) are cytoplasmic. A helical membrane pass occupies residues 166–186 (FHYWVLSGLISFGYFGYGFPF). The Lumenal portion of the chain corresponds to 187–201 (GNAKLFKYYSYLKLD). Residues 202-222 (DLSTLIGLFVLSELWNFYCHI) traverse the membrane as a helical segment. The Cytoplasmic segment spans residues 223–242 (KLRLWGDYQKKHGNAKIRVP). Residues 243–265 (LNQGIFNLFVAPNYTFEVWSWIW) traverse the membrane as a helical segment. Residues 266–268 (FTF) are Lumenal-facing. A helical transmembrane segment spans residues 269-291 (VFKFNLFAVLFLTVSTAQMYAWA). The Cytoplasmic portion of the chain corresponds to 292 to 310 (QKKNKKYHTRRAFLIPFVF).

This sequence belongs to the steroid 5-alpha reductase family. As to quaternary structure, interacts with the fatty acid elongation system components ELO2 and ELO3. Interacts with NVJ1.

The protein localises to the endoplasmic reticulum membrane. It carries out the reaction a very-long-chain 2,3-saturated fatty acyl-CoA + NADP(+) = a very-long-chain (2E)-enoyl-CoA + NADPH + H(+). The catalysed reaction is octadecanoyl-CoA + NADP(+) = (2E)-octadecenoyl-CoA + NADPH + H(+). It catalyses the reaction (2E)-eicosenoyl-CoA + NADPH + H(+) = eicosanoyl-CoA + NADP(+). The enzyme catalyses (2E)-docosenoyl-CoA + NADPH + H(+) = docosanoyl-CoA + NADP(+). It carries out the reaction (2E)-tetracosenoyl-CoA + NADPH + H(+) = tetracosanoyl-CoA + NADP(+). The catalysed reaction is (2E)-hexacosenoyl-CoA + NADPH + H(+) = hexacosanoyl-CoA + NADP(+). Its pathway is lipid metabolism; fatty acid biosynthesis. Functionally, catalyzes the last of the four reactions of the long-chain fatty acids elongation cycle. This endoplasmic reticulum-bound enzymatic process, allows the addition of 2 carbons to the chain of long- and very long-chain fatty acids/VLCFAs per cycle. This enzyme reduces the trans-2,3-enoyl-CoA fatty acid intermediate to an acyl-CoA that can be further elongated by entering a new cycle of elongation. Thereby, it participates in the production of VLCFAs of different chain lengths that are involved in multiple biological processes as precursors of membrane lipids and lipid mediators. VLCFAs serve for instance as precursors for ceramide and sphingolipids. Required for normal biogenesis of piecemeal microautophagy of the nucleus (PMN) bleps and vesicles during nutrient stress. The protein is Very-long-chain enoyl-CoA reductase (TSC13) of Saccharomyces cerevisiae (strain ATCC 204508 / S288c) (Baker's yeast).